Consider the following 194-residue polypeptide: Putative manganese efflux pump MntP (194 aa).

The next 6 helical transmembrane spans lie at 3–23 (PITI…AAIG), 37–57 (LYVA…GWLL), 65–85 (IATF…IHMI), 112–132 (LAAT…SLAF), 139–159 (IVAA…VMLG), and 170–190 (AEIV…YEHL).

The protein belongs to the MntP (TC 9.B.29) family.

The protein resides in the cell inner membrane. Its function is as follows. Probably functions as a manganese efflux pump. The polypeptide is Putative manganese efflux pump MntP (Xylella fastidiosa (strain 9a5c)).